We begin with the raw amino-acid sequence, 1327 residues long: Kinectin (1327 aa).

At 1-8 (MELYESTY) the chain is on the cytoplasmic side. Residues 9 to 29 (FIVLIPSVVITVIFLFFWLFM) form a helical; Signal-anchor for type II membrane protein membrane-spanning segment. The Lumenal segment spans residues 30 to 1327 (KETLYDEVLA…EVNQQLTKET (1298 aa)). Disordered stretches follow at residues 49 to 181 (STKT…EQDK) and 197 to 216 (LSHQ…GLSK). Asn-69 carries N-linked (GlcNAc...) asparagine glycosylation. Basic and acidic residues-rich tracts occupy residues 73–86 (RESD…DFKL) and 111–135 (VRER…ESDA). Residues Ser-75 and Ser-77 each carry the phosphoserine modification. The span at 163–173 (LKKKAGQKKSK) shows a compositional bias: basic residues. The stretch at 329 to 1327 (ELSGLLHQLQ…EVNQQLTKET (999 aa)) forms a coiled coil. Asn-1031 carries an N-linked (GlcNAc...) asparagine glycan. Ser-1060 is subject to Phosphoserine. The N-linked (GlcNAc...) asparagine glycan is linked to Asn-1066. Ser-1290 is modified (phosphoserine).

This sequence belongs to the kinectin family. In terms of tissue distribution, expressed in all tissues examined including 12-day embryo, adult heart, brain, ovary, kidney, lung, small intestine, spleen, thymus and pancreas.

It localises to the endoplasmic reticulum membrane. Its function is as follows. Receptor for kinesin thus involved in kinesin-driven vesicle motility. Accumulates in integrin-based adhesion complexes (IAC) upon integrin aggregation by fibronectin. In Mus musculus (Mouse), this protein is Kinectin.